We begin with the raw amino-acid sequence, 245 residues long: Octanoyltransferase (245 aa).

A BPL/LPL catalytic domain is found at 54–242 (QNAHEQVWLL…SFEQIFGPII (189 aa)). Substrate is bound by residues 93–100 (RGGEFTYH), 173–175 (AIG), and 186–188 (GVS). Cys-204 serves as the catalytic Acyl-thioester intermediate.

It belongs to the LipB family.

It localises to the cytoplasm. It catalyses the reaction octanoyl-[ACP] + L-lysyl-[protein] = N(6)-octanoyl-L-lysyl-[protein] + holo-[ACP] + H(+). Its pathway is protein modification; protein lipoylation via endogenous pathway; protein N(6)-(lipoyl)lysine from octanoyl-[acyl-carrier-protein]: step 1/2. In terms of biological role, catalyzes the transfer of endogenously produced octanoic acid from octanoyl-acyl-carrier-protein onto the lipoyl domains of lipoate-dependent enzymes. Lipoyl-ACP can also act as a substrate although octanoyl-ACP is likely to be the physiological substrate. This is Octanoyltransferase from Bartonella henselae (strain ATCC 49882 / DSM 28221 / CCUG 30454 / Houston 1) (Rochalimaea henselae).